The sequence spans 122 residues: Small ribosomal subunit protein uS13 (122 aa).

The tract at residues glycine 95 to lysine 122 is disordered.

The protein belongs to the universal ribosomal protein uS13 family. As to quaternary structure, part of the 30S ribosomal subunit. Forms a loose heterodimer with protein S19. Forms two bridges to the 50S subunit in the 70S ribosome.

Its function is as follows. Located at the top of the head of the 30S subunit, it contacts several helices of the 16S rRNA. In the 70S ribosome it contacts the 23S rRNA (bridge B1a) and protein L5 of the 50S subunit (bridge B1b), connecting the 2 subunits; these bridges are implicated in subunit movement. Contacts the tRNAs in the A and P-sites. The protein is Small ribosomal subunit protein uS13 of Nitrobacter hamburgensis (strain DSM 10229 / NCIMB 13809 / X14).